We begin with the raw amino-acid sequence, 345 residues long: Leucine-rich repeat and transmembrane domain-containing protein 1 (345 aa).

An N-terminal signal peptide occupies residues 1-27 (MKGELLLFSSVIVLLQVVCSCPDKCYC). Positions 28–50 (QSSTNFVDCSQQGLAEIPSHLPP) constitute an LRRNT domain. At 28 to 288 (QSSTNFVDCS…PANLRHAIAT (261 aa)) the chain is on the extracellular side. LRR repeat units lie at residues 51-72 (QTRTLHLQDNQIHHLPAFAFRS), 75-96 (WLMTLNLSNNSLSNLAPGAFHG), 99-120 (HLQVLNLTQNSLLSLESRLFHS), 123-144 (QLRELDLSSNNISHLPTSLGET), and 147-168 (NLTILAVQQNQLQQLDRALLES). Asn104 carries N-linked (GlcNAc...) asparagine glycosylation. The N-linked (GlcNAc...) asparagine glycan is linked to Asn147. Positions 180–234 (NLWKCNCHLLGLKLWLEKFVYKGGLTDGIICESPDTWKGKDLLRIPHELYQPCPL) constitute an LRRCT domain. A helical transmembrane segment spans residues 289–309 (VIITGVVCGIVCLMMLAAAIY). Topologically, residues 310–345 (GCTYAAITAQYHGGPLAQTNDPGKVEEKERFDSSPA) are cytoplasmic. A disordered region spans residues 326-345 (AQTNDPGKVEEKERFDSSPA). Positions 332–345 (GKVEEKERFDSSPA) are enriched in basic and acidic residues.

It is found in the membrane. The chain is Leucine-rich repeat and transmembrane domain-containing protein 1 (LRTM1) from Homo sapiens (Human).